The primary structure comprises 315 residues: Methionyl-tRNA formyltransferase (315 aa).

Residue 113-116 (SLLP) coordinates (6S)-5,6,7,8-tetrahydrofolate.

It belongs to the Fmt family.

It catalyses the reaction L-methionyl-tRNA(fMet) + (6R)-10-formyltetrahydrofolate = N-formyl-L-methionyl-tRNA(fMet) + (6S)-5,6,7,8-tetrahydrofolate + H(+). Its function is as follows. Attaches a formyl group to the free amino group of methionyl-tRNA(fMet). The formyl group appears to play a dual role in the initiator identity of N-formylmethionyl-tRNA by promoting its recognition by IF2 and preventing the misappropriation of this tRNA by the elongation apparatus. In Escherichia coli O6:K15:H31 (strain 536 / UPEC), this protein is Methionyl-tRNA formyltransferase.